The primary structure comprises 34 residues: Potassium channel toxin alpha-KTx 18.2 (34 aa).

3 cysteine pairs are disulfide-bonded: Cys7–Cys26, Cys12–Cys31, and Cys16–Cys33.

In terms of tissue distribution, expressed by the venom gland.

It is found in the secreted. Functionally, reversibly blocks Shaker B potassium channels. The sequence is that of Potassium channel toxin alpha-KTx 18.2 from Tityus discrepans (Venezuelan scorpion).